We begin with the raw amino-acid sequence, 488 residues long: (Z)-2-((N-methylformamido)methylene)-5-hydroxybutyrolactone dehydrogenase (488 aa).

Residues 149–150 and 226–227 contribute to the NAD(+) site; these read WN and GG. Catalysis depends on Glu-248, which acts as the Proton acceptor. Residue Leu-249 coordinates NAD(+). Cys-282 (nucleophile) is an active-site residue. An NAD(+)-binding site is contributed by Glu-380.

This sequence belongs to the aldehyde dehydrogenase family. As to quaternary structure, homodimer.

It carries out the reaction (Z)-2-((N-methylformamido)methylene)-5-hydroxybutanolactone + NAD(+) + H2O = (E)-2-((N-methylformamido) methylene)succinate + NADH + 3 H(+). Involved in the degradation of the pyridine ring of trigonelline (TG; N-methylnicotinate) into succinate and methylamine as carbon and nitrogen sources, respectively. Catalyzes the NAD(+)-dependent oxidation of (Z)-2-((N-methylformamido)methylene)-5-hydroxybutyrolactone (MFMB) to yield (E)-2-((N-methylformamido)methylene)succinate (MFMS). In Acinetobacter baylyi (strain ATCC 33305 / BD413 / ADP1), this protein is (Z)-2-((N-methylformamido)methylene)-5-hydroxybutyrolactone dehydrogenase.